A 920-amino-acid chain; its full sequence is DNA topoisomerase 4 subunit A (920 aa).

A Topo IIA-type catalytic domain is found at 37-509; the sequence is LPDVRDGLKP…MPAKIEPLPV (473 aa). Tyr125 acts as the O-(5'-phospho-DNA)-tyrosine intermediate in catalysis. The interval 499–566 is disordered; that stretch reads GMPAKIEPLP…PEAKQDDLNL (68 aa). Acidic residues predominate over residues 528–540; sequence PEEELDSPGEPEQ.

It belongs to the type II topoisomerase GyrA/ParC subunit family. Heterotetramer composed of ParC and ParE.

It is found in the cell membrane. It carries out the reaction ATP-dependent breakage, passage and rejoining of double-stranded DNA.. In terms of biological role, topoisomerase IV is essential for chromosome segregation. It relaxes supercoiled DNA. Performs the decatenation events required during the replication of a circular DNA molecule. The chain is DNA topoisomerase 4 subunit A (parC) from Synechocystis sp. (strain ATCC 27184 / PCC 6803 / Kazusa).